The primary structure comprises 119 residues: Ribonuclease P protein component (119 aa).

It belongs to the RnpA family. In terms of assembly, consists of a catalytic RNA component (M1 or rnpB) and a protein subunit.

It catalyses the reaction Endonucleolytic cleavage of RNA, removing 5'-extranucleotides from tRNA precursor.. RNaseP catalyzes the removal of the 5'-leader sequence from pre-tRNA to produce the mature 5'-terminus. It can also cleave other RNA substrates such as 4.5S RNA. The protein component plays an auxiliary but essential role in vivo by binding to the 5'-leader sequence and broadening the substrate specificity of the ribozyme. The polypeptide is Ribonuclease P protein component (Mycobacterium avium (strain 104)).